The chain runs to 225 residues: uncharacterized protein (225 aa).

This is an uncharacterized protein from Mycoplasma pneumoniae (strain ATCC 29342 / M129 / Subtype 1) (Mycoplasmoides pneumoniae).